The following is a 535-amino-acid chain: Probable galacturonosyltransferase 12 (535 aa).

Topologically, residues 1 to 37 (MQLHISPSLRHVTVVTGKGLREFIKVKVGSRRFSYQM) are cytoplasmic. Residues 38-58 (VFYSLLFFTFLLRFVFVLSTV) form a helical; Signal-anchor for type II membrane protein membrane-spanning segment. Over 59-535 (DTIDGDPSPC…FIKSCHIRAS (477 aa)) the chain is Lumenal. 2 N-linked (GlcNAc...) asparagine glycosylation sites follow: Asn-397 and Asn-430.

This sequence belongs to the glycosyltransferase 8 family. In terms of tissue distribution, highly expressed in stems. Detected in roots, inflorescences, siliques, and leaves. Expressed in cells undergoing secondary wall thickening, including interfascicular fibers and primary and secondary xylem.

It is found in the golgi apparatus membrane. It functions in the pathway glycan metabolism; pectin biosynthesis. Its function is as follows. Involved in pectin assembly and/or distribution, and in the synthesis of secondary wall glucuronoxylan. Probably involved in the synthesis of the glycosyl sequence at the glucuronoxylan reducing end. May be involved in synthesis of a complex glycan primer for xylan synthesis. This chain is Probable galacturonosyltransferase 12 (GAUT12), found in Arabidopsis thaliana (Mouse-ear cress).